The following is a 462-amino-acid chain: MSQFPSSAIFTVSRLNQTVRQLLEMEMGQIWLSGEISNLSQPSSGHWYFTLKDERAQVRCAMFRTSNRRVTFRPQNGQQVLIRATITLYEPRGDYQLLAESMQPAGDGLLQQQFEQLKQKLAAEGLFDQQFKQVLPSPAKQVGVITSASGAALHDILQVLQRRDPSLPVIVYPTSVQGADAPLQIVRAIELANQREECDVLIVGRGGGSLEDLWSFNDERVARAIFASRIPIVSAVGHETDVTIADFVGDLRAPTPSAAAELVSRNQLELLRQIQSQRQRLEMAMDYYLAQRNREFTRLHHRLQQQHPQLRLARQQAQLVKLRQRLDDAMQQQLRQTLRRSERLQQRLMQQQPQTRIHRAQQRLQQLSYQMQSAVERQLNQNKQKLGIACSRLEGVSPLATLARGYNVTTAPDGKVLKNVTQITPGETLKTRLQDGWVESQVTTLVPNPSSVKKRRKPSSQS.

Belongs to the XseA family. In terms of assembly, heterooligomer composed of large and small subunits.

It is found in the cytoplasm. The catalysed reaction is Exonucleolytic cleavage in either 5'- to 3'- or 3'- to 5'-direction to yield nucleoside 5'-phosphates.. Functionally, bidirectionally degrades single-stranded DNA into large acid-insoluble oligonucleotides, which are then degraded further into small acid-soluble oligonucleotides. The protein is Exodeoxyribonuclease 7 large subunit of Pectobacterium carotovorum subsp. carotovorum (strain PC1).